The primary structure comprises 120 residues: MAENVTSAKATAFQVRIAPRKARLVLDTVRGKSVNEAYAILKFLPNTGTEPVYKVLNSAVANAENNFALDRADLVIKEAYANEGPTMKRFRPRAKGTASKINKRTSHITIVVSENDKKGA.

The protein belongs to the universal ribosomal protein uL22 family. Part of the 50S ribosomal subunit.

Its function is as follows. This protein binds specifically to 23S rRNA; its binding is stimulated by other ribosomal proteins, e.g. L4, L17, and L20. It is important during the early stages of 50S assembly. It makes multiple contacts with different domains of the 23S rRNA in the assembled 50S subunit and ribosome. In terms of biological role, the globular domain of the protein is located near the polypeptide exit tunnel on the outside of the subunit, while an extended beta-hairpin is found that lines the wall of the exit tunnel in the center of the 70S ribosome. The polypeptide is Large ribosomal subunit protein uL22 (Oenococcus oeni (strain ATCC BAA-331 / PSU-1)).